Here is a 217-residue protein sequence, read N- to C-terminus: Small ribosomal subunit protein uS2 (217 aa).

The protein belongs to the universal ribosomal protein uS2 family.

The polypeptide is Small ribosomal subunit protein uS2 (Korarchaeum cryptofilum (strain OPF8)).